Here is a 1014-residue protein sequence, read N- to C-terminus: Valine--tRNA ligase (1014 aa).

The 'HIGH' region signature appears at 49–59; sequence PNVTGSLHMGH. Positions 542-546 match the 'KMSKS' region motif; that stretch reads KMSKS. K545 contributes to the ATP binding site. Residues 947-1014 are a coiled coil; it reads VVDIETLRAK…ILRLRLQTLV (68 aa).

The protein belongs to the class-I aminoacyl-tRNA synthetase family. ValS type 1 subfamily. Monomer.

It localises to the cytoplasm. The catalysed reaction is tRNA(Val) + L-valine + ATP = L-valyl-tRNA(Val) + AMP + diphosphate. In terms of biological role, catalyzes the attachment of valine to tRNA(Val). As ValRS can inadvertently accommodate and process structurally similar amino acids such as threonine, to avoid such errors, it has a 'posttransfer' editing activity that hydrolyzes mischarged Thr-tRNA(Val) in a tRNA-dependent manner. The polypeptide is Valine--tRNA ligase (Nostoc sp. (strain PCC 7120 / SAG 25.82 / UTEX 2576)).